The primary structure comprises 255 residues: Hydroxyacylglutathione hydrolase (255 aa).

Zn(2+) is bound by residues His-56, His-58, Asp-60, His-61, His-114, Asp-133, and His-171.

It belongs to the metallo-beta-lactamase superfamily. Glyoxalase II family. Monomer. Zn(2+) is required as a cofactor.

The enzyme catalyses an S-(2-hydroxyacyl)glutathione + H2O = a 2-hydroxy carboxylate + glutathione + H(+). The protein operates within secondary metabolite metabolism; methylglyoxal degradation; (R)-lactate from methylglyoxal: step 2/2. Thiolesterase that catalyzes the hydrolysis of S-D-lactoyl-glutathione to form glutathione and D-lactic acid. The chain is Hydroxyacylglutathione hydrolase from Roseobacter denitrificans (strain ATCC 33942 / OCh 114) (Erythrobacter sp. (strain OCh 114)).